The following is a 617-amino-acid chain: Probable Xaa-Pro aminopeptidase P (617 aa).

Mn(2+) contacts are provided by D414, D425, E523, and E537.

This sequence belongs to the peptidase M24B family. It depends on Mn(2+) as a cofactor.

The catalysed reaction is Release of any N-terminal amino acid, including proline, that is linked to proline, even from a dipeptide or tripeptide.. Catalyzes the removal of a penultimate prolyl residue from the N-termini of peptides. The sequence is that of Probable Xaa-Pro aminopeptidase P (AMPP) from Ajellomyces capsulatus (strain G186AR / H82 / ATCC MYA-2454 / RMSCC 2432) (Darling's disease fungus).